The sequence spans 115 residues: Ribonuclease P protein component 4 (115 aa).

Zn(2+) contacts are provided by C66, C69, C96, and C99.

Belongs to the eukaryotic/archaeal RNase P protein component 4 family. As to quaternary structure, consists of a catalytic RNA component and at least 4-5 protein subunits. Zn(2+) serves as cofactor.

It localises to the cytoplasm. It catalyses the reaction Endonucleolytic cleavage of RNA, removing 5'-extranucleotides from tRNA precursor.. In terms of biological role, part of ribonuclease P, a protein complex that generates mature tRNA molecules by cleaving their 5'-ends. This chain is Ribonuclease P protein component 4, found in Hyperthermus butylicus (strain DSM 5456 / JCM 9403 / PLM1-5).